Reading from the N-terminus, the 601-residue chain is MSISIRKKNFCIIAHIDHGKSTLADRFIQKAKIISDRDFKSQMLDSMEIERERGITIKSQVVTITYKSNDGDCYELNFVDTPGHVDFSYEVSRAISSCEGALLLIDASQGIQAQTVSNFYMAFEHDLEIIPVINKIDLPNANIDFVKKQIKNDLGLNEEIAISISAKNGIGIDDLLEAICKHVPSPRGSIKDPLRALIFDSHYDSYRGVVVHFRIFEGQIKTGDKIRLMHTNSEHLIEEIGVFKISLERKDRLEAGDVGYFIAGIKNISDVKIGDTVTLCDCPALSPLEGFKEVKPVVFSSVYPVDANQYDDLLKAMDRLKLNDASLTFEKDSSSALGHGFKCGFLGLLHLEVIQERIEREFDLNVILTSPSVRYKIIPKKGESYFIESPEQFHGNEAIEGVLEPYIRANIIVPTEFLGNIMSVCLLKRGVQTSLIYLDTKRVELIYKMPLSEILFDFYDKIKSVSRGYASFDYELLDYEYTDLVRLDILVNGDRVDALSQLVFKDSAKTKAIGICKKLKDEIARQQFKIAIQGAIGSNVIARETISPVRKDVTAKCYGGDITRKRKLLEKQKEGKKRMKMVGNVEIPQRAFLAVLKSNDN.

The tr-type G domain maps to 5–187; it reads IRKKNFCIIA…AICKHVPSPR (183 aa). GTP contacts are provided by residues 17–22 and 134–137; these read DHGKST and NKID.

The protein belongs to the TRAFAC class translation factor GTPase superfamily. Classic translation factor GTPase family. LepA subfamily.

The protein resides in the cell inner membrane. The catalysed reaction is GTP + H2O = GDP + phosphate + H(+). Its function is as follows. Required for accurate and efficient protein synthesis under certain stress conditions. May act as a fidelity factor of the translation reaction, by catalyzing a one-codon backward translocation of tRNAs on improperly translocated ribosomes. Back-translocation proceeds from a post-translocation (POST) complex to a pre-translocation (PRE) complex, thus giving elongation factor G a second chance to translocate the tRNAs correctly. Binds to ribosomes in a GTP-dependent manner. This chain is Elongation factor 4, found in Borrelia garinii subsp. bavariensis (strain ATCC BAA-2496 / DSM 23469 / PBi) (Borreliella bavariensis).